The chain runs to 218 residues: Recombination protein RecR (218 aa).

Residues 56–71 (CRICCNISRDEVCRIC) form a C4-type zinc finger. One can recognise a Toprim domain in the interval 79–195 (GLICVVEEPK…VVSRLASGMP (117 aa)).

It belongs to the RecR family.

Its function is as follows. May play a role in DNA repair. It seems to be involved in an RecBC-independent recombinational process of DNA repair. It may act with RecF and RecO. The sequence is that of Recombination protein RecR from Corynebacterium efficiens (strain DSM 44549 / YS-314 / AJ 12310 / JCM 11189 / NBRC 100395).